A 278-amino-acid polypeptide reads, in one-letter code: MLVHPQFDPVAISIGPLAVRWYGLMYLLGFSLFILLGRYRIRQQPNGVFTREMLDDALFYGVLGVILGGRLGHVLFYEPGYYLQHPLEILAIWQGGMSFHGGFLGVAIAMLCLARKYQLSWLAVTDFIAPLVPLGLGAGRIGNFINGELWGRPTDVPWGMIFPYADNLPRHPSQLYEFALEGLVLFALIWLYSAKPRPLGAVTGMFMIGYGAFRSFCEFFREPDDGFLGIMTLGISMGQWLSLPMIAAGIALLYWAYRYDGKPEKAARKLPRERKNRD.

A run of 4 helical transmembrane segments spans residues leucine 17–glycine 37, alanine 57–tyrosine 77, isoleucine 89–alanine 109, and leucine 119–glycine 139. Arginine 140 provides a ligand contact to a 1,2-diacyl-sn-glycero-3-phospho-(1'-sn-glycerol). A run of 3 helical transmembrane segments spans residues glutamine 174–alanine 194, glycine 200–phenylalanine 220, and leucine 233–leucine 253.

This sequence belongs to the Lgt family.

It localises to the cell inner membrane. The enzyme catalyses L-cysteinyl-[prolipoprotein] + a 1,2-diacyl-sn-glycero-3-phospho-(1'-sn-glycerol) = an S-1,2-diacyl-sn-glyceryl-L-cysteinyl-[prolipoprotein] + sn-glycerol 1-phosphate + H(+). The protein operates within protein modification; lipoprotein biosynthesis (diacylglyceryl transfer). In terms of biological role, catalyzes the transfer of the diacylglyceryl group from phosphatidylglycerol to the sulfhydryl group of the N-terminal cysteine of a prolipoprotein, the first step in the formation of mature lipoproteins. The polypeptide is Phosphatidylglycerol--prolipoprotein diacylglyceryl transferase (Nitrosomonas europaea (strain ATCC 19718 / CIP 103999 / KCTC 2705 / NBRC 14298)).